The following is a 237-amino-acid chain: Purine nucleoside phosphorylase DeoD-type (237 aa).

A purine D-ribonucleoside is bound at residue H4. Residues G20, R24, R43, and 87 to 90 (RVGT) contribute to the phosphate site. Residues 179-181 (EME) and 203-204 (SD) contribute to the a purine D-ribonucleoside site. The active-site Proton donor is D204.

The protein belongs to the PNP/UDP phosphorylase family. As to quaternary structure, homohexamer; trimer of homodimers.

It catalyses the reaction a purine D-ribonucleoside + phosphate = a purine nucleobase + alpha-D-ribose 1-phosphate. The enzyme catalyses a purine 2'-deoxy-D-ribonucleoside + phosphate = a purine nucleobase + 2-deoxy-alpha-D-ribose 1-phosphate. In terms of biological role, catalyzes the reversible phosphorolytic breakdown of the N-glycosidic bond in the beta-(deoxy)ribonucleoside molecules, with the formation of the corresponding free purine bases and pentose-1-phosphate. This is Purine nucleoside phosphorylase DeoD-type from Clostridium beijerinckii (strain ATCC 51743 / NCIMB 8052) (Clostridium acetobutylicum).